The chain runs to 163 residues: Cyanate hydratase (163 aa).

Residues Arg-103, Glu-106, and Ser-129 contribute to the active site.

Belongs to the cyanase family.

The catalysed reaction is cyanate + hydrogencarbonate + 3 H(+) = NH4(+) + 2 CO2. Functionally, catalyzes the reaction of cyanate with bicarbonate to produce ammonia and carbon dioxide. This chain is Cyanate hydratase, found in Ajellomyces dermatitidis (strain ER-3 / ATCC MYA-2586) (Blastomyces dermatitidis).